The following is a 327-amino-acid chain: tRNA uridine(34) hydroxylase (327 aa).

Residues 142-240 (DDPDTLVIDT…YLEQVPEAES (99 aa)) enclose the Rhodanese domain. Cys200 serves as the catalytic Cysteine persulfide intermediate.

This sequence belongs to the TrhO family.

It catalyses the reaction uridine(34) in tRNA + AH2 + O2 = 5-hydroxyuridine(34) in tRNA + A + H2O. Its function is as follows. Catalyzes oxygen-dependent 5-hydroxyuridine (ho5U) modification at position 34 in tRNAs. The polypeptide is tRNA uridine(34) hydroxylase (Synechococcus sp. (strain CC9605)).